Here is a 173-residue protein sequence, read N- to C-terminus: uncharacterized protein (173 aa).

Positions M1 to G15 are cleaved as a propeptide — leader sequence. Position 16 is an N-methylphenylalanine (F16). A helical transmembrane segment spans residues F16–I37.

It is found in the membrane. This is an uncharacterized protein from Aquifex aeolicus (strain VF5).